We begin with the raw amino-acid sequence, 179 residues long: Large ribosomal subunit protein uL5 (179 aa).

The protein belongs to the universal ribosomal protein uL5 family. As to quaternary structure, part of the 50S ribosomal subunit; part of the 5S rRNA/L5/L18/L25 subcomplex. Contacts the 5S rRNA and the P site tRNA. Forms a bridge to the 30S subunit in the 70S ribosome.

In terms of biological role, this is one of the proteins that bind and probably mediate the attachment of the 5S RNA into the large ribosomal subunit, where it forms part of the central protuberance. In the 70S ribosome it contacts protein S13 of the 30S subunit (bridge B1b), connecting the 2 subunits; this bridge is implicated in subunit movement. Contacts the P site tRNA; the 5S rRNA and some of its associated proteins might help stabilize positioning of ribosome-bound tRNAs. The chain is Large ribosomal subunit protein uL5 from Shewanella putrefaciens (strain CN-32 / ATCC BAA-453).